We begin with the raw amino-acid sequence, 161 residues long: 2-C-methyl-D-erythritol 2,4-cyclodiphosphate synthase (161 aa).

A divalent metal cation-binding residues include aspartate 9 and histidine 11. 4-CDP-2-C-methyl-D-erythritol 2-phosphate contacts are provided by residues 9 to 11 (DFH) and 37 to 38 (HS). Residue histidine 45 participates in a divalent metal cation binding. 4-CDP-2-C-methyl-D-erythritol 2-phosphate-binding positions include 59 to 61 (DIG), 64 to 68 (FPDTD), 135 to 138 (TTTE), and arginine 145.

It belongs to the IspF family. As to quaternary structure, homotrimer. The cofactor is a divalent metal cation.

The catalysed reaction is 4-CDP-2-C-methyl-D-erythritol 2-phosphate = 2-C-methyl-D-erythritol 2,4-cyclic diphosphate + CMP. Its pathway is isoprenoid biosynthesis; isopentenyl diphosphate biosynthesis via DXP pathway; isopentenyl diphosphate from 1-deoxy-D-xylulose 5-phosphate: step 4/6. Involved in the biosynthesis of isopentenyl diphosphate (IPP) and dimethylallyl diphosphate (DMAPP), two major building blocks of isoprenoid compounds. Catalyzes the conversion of 4-diphosphocytidyl-2-C-methyl-D-erythritol 2-phosphate (CDP-ME2P) to 2-C-methyl-D-erythritol 2,4-cyclodiphosphate (ME-CPP) with a corresponding release of cytidine 5-monophosphate (CMP). The sequence is that of 2-C-methyl-D-erythritol 2,4-cyclodiphosphate synthase from Leptospira interrogans serogroup Icterohaemorrhagiae serovar copenhageni (strain Fiocruz L1-130).